The primary structure comprises 692 residues: Elongation factor G (692 aa).

Residues 8–282 (PNTRNIGIMA…NVVAYLPSPV (275 aa)) form the tr-type G domain. GTP-binding positions include 17–24 (AHIDAGKT), 81–85 (DTPGH), and 135–138 (NKMD).

This sequence belongs to the TRAFAC class translation factor GTPase superfamily. Classic translation factor GTPase family. EF-G/EF-2 subfamily.

It localises to the cytoplasm. Functionally, catalyzes the GTP-dependent ribosomal translocation step during translation elongation. During this step, the ribosome changes from the pre-translocational (PRE) to the post-translocational (POST) state as the newly formed A-site-bound peptidyl-tRNA and P-site-bound deacylated tRNA move to the P and E sites, respectively. Catalyzes the coordinated movement of the two tRNA molecules, the mRNA and conformational changes in the ribosome. This chain is Elongation factor G, found in Brevibacillus brevis (strain 47 / JCM 6285 / NBRC 100599).